The primary structure comprises 324 residues: Phospho-N-acetylmuramoyl-pentapeptide-transferase (324 aa).

A run of 10 helical transmembrane segments spans residues 5 to 25 (GLLV…PLFI), 52 to 72 (PTMG…IMAI), 77 to 97 (LGAE…IGFL), 122 to 142 (VIAI…YIMI), 149 to 169 (FELG…GSNA), 176 to 196 (LDGL…IIAV), 201 to 221 (FGVA…LVFN), 227 to 247 (VFMG…VAIL), 253 to 273 (LLVI…IQVI), and 302 to 322 (VVVT…YIGV).

It belongs to the glycosyltransferase 4 family. MraY subfamily. It depends on Mg(2+) as a cofactor.

The protein resides in the cell membrane. It carries out the reaction UDP-N-acetyl-alpha-D-muramoyl-L-alanyl-gamma-D-glutamyl-meso-2,6-diaminopimeloyl-D-alanyl-D-alanine + di-trans,octa-cis-undecaprenyl phosphate = di-trans,octa-cis-undecaprenyl diphospho-N-acetyl-alpha-D-muramoyl-L-alanyl-D-glutamyl-meso-2,6-diaminopimeloyl-D-alanyl-D-alanine + UMP. Its pathway is cell wall biogenesis; peptidoglycan biosynthesis. Its function is as follows. Catalyzes the initial step of the lipid cycle reactions in the biosynthesis of the cell wall peptidoglycan: transfers peptidoglycan precursor phospho-MurNAc-pentapeptide from UDP-MurNAc-pentapeptide onto the lipid carrier undecaprenyl phosphate, yielding undecaprenyl-pyrophosphoryl-MurNAc-pentapeptide, known as lipid I. The polypeptide is Phospho-N-acetylmuramoyl-pentapeptide-transferase (Bacillus mycoides (strain KBAB4) (Bacillus weihenstephanensis)).